The following is a 188-amino-acid chain: Elongation factor P (188 aa).

It belongs to the elongation factor P family.

It is found in the cytoplasm. It functions in the pathway protein biosynthesis; polypeptide chain elongation. Functionally, involved in peptide bond synthesis. Stimulates efficient translation and peptide-bond synthesis on native or reconstituted 70S ribosomes in vitro. Probably functions indirectly by altering the affinity of the ribosome for aminoacyl-tRNA, thus increasing their reactivity as acceptors for peptidyl transferase. This Rickettsia akari (strain Hartford) protein is Elongation factor P.